A 252-amino-acid chain; its full sequence is N-acetylglucosaminyl-phosphatidylinositol de-N-acetylase (252 aa).

The chain crosses the membrane as a helical span at residues 2–22; the sequence is ELVGFLCVAVAVLTWGFLRVW. At 23–252 the chain is on the cytoplasmic side; that stretch reads NSAERMRSPE…YMRINSLRFL (230 aa).

This sequence belongs to the PIGL family.

Its subcellular location is the endoplasmic reticulum membrane. The catalysed reaction is a 6-(N-acetyl-alpha-D-glucosaminyl)-1-(1,2-diacyl-sn-glycero-3-phospho)-1D-myo-inositol + H2O = a 6-(alpha-D-glucosaminyl)-1-(1,2-diacyl-sn-glycero-3-phospho)-1D-myo-inositol + acetate. The protein operates within glycolipid biosynthesis; glycosylphosphatidylinositol-anchor biosynthesis. Its function is as follows. Catalyzes the second step of glycosylphosphatidylinositol (GPI) biosynthesis, which is the de-N-acetylation of N-acetylglucosaminyl-phosphatidylinositol. In Mus musculus (Mouse), this protein is N-acetylglucosaminyl-phosphatidylinositol de-N-acetylase (Pigl).